The chain runs to 458 residues: Protein unc-93 homolog A (458 aa).

Helical transmembrane passes span Val8–Leu28, Thr42–Ile62, Trp69–Asn89, Trp90–Ala110, and Ile140–Phe160. Asn190 carries N-linked (GlcNAc...) asparagine glycosylation. Helical transmembrane passes span Thr202–Leu222, Leu258–Leu275, Cys286–Leu306, Ala321–Trp341, Thr345–Trp365, Leu390–Thr410, and Leu412–Leu432.

It belongs to the unc-93 family.

It localises to the cell membrane. The polypeptide is Protein unc-93 homolog A (Unc93a) (Mus musculus (Mouse)).